The sequence spans 331 residues: Glyceraldehyde-3-phosphate dehydrogenase (331 aa).

NAD(+) is bound by residues 11 to 12 (RI), D33, and R78. D-glyceraldehyde 3-phosphate contacts are provided by residues 148–150 (SCT), T179, 208–209 (TG), and R231. The Nucleophile role is filled by C149. Residue N313 coordinates NAD(+).

This sequence belongs to the glyceraldehyde-3-phosphate dehydrogenase family. As to quaternary structure, homotetramer.

Its subcellular location is the cytoplasm. The catalysed reaction is D-glyceraldehyde 3-phosphate + phosphate + NAD(+) = (2R)-3-phospho-glyceroyl phosphate + NADH + H(+). Its pathway is carbohydrate degradation; glycolysis; pyruvate from D-glyceraldehyde 3-phosphate: step 1/5. This Eremothecium gossypii (strain ATCC 10895 / CBS 109.51 / FGSC 9923 / NRRL Y-1056) (Yeast) protein is Glyceraldehyde-3-phosphate dehydrogenase (GPD).